Reading from the N-terminus, the 207-residue chain is Putative acetyltransferase C18B11.09c (207 aa).

Belongs to the transferase hexapeptide repeat family.

This Schizosaccharomyces pombe (strain 972 / ATCC 24843) (Fission yeast) protein is Putative acetyltransferase C18B11.09c.